The following is a 431-amino-acid chain: Gamma-glutamyl phosphate reductase (431 aa).

This sequence belongs to the gamma-glutamyl phosphate reductase family.

The protein localises to the cytoplasm. It carries out the reaction L-glutamate 5-semialdehyde + phosphate + NADP(+) = L-glutamyl 5-phosphate + NADPH + H(+). It participates in amino-acid biosynthesis; L-proline biosynthesis; L-glutamate 5-semialdehyde from L-glutamate: step 2/2. In terms of biological role, catalyzes the NADPH-dependent reduction of L-glutamate 5-phosphate into L-glutamate 5-semialdehyde and phosphate. The product spontaneously undergoes cyclization to form 1-pyrroline-5-carboxylate. This Synechococcus elongatus (strain ATCC 33912 / PCC 7942 / FACHB-805) (Anacystis nidulans R2) protein is Gamma-glutamyl phosphate reductase.